The following is a 353-amino-acid chain: Photosystem II protein D1 (353 aa).

Residue T2 is modified to N-acetylthreonine. T2 bears the Phosphothreonine mark. The next 3 helical transmembrane spans lie at 29 to 46 (YIGW…TATS), 118 to 133 (HFLL…EWEL), and 142 to 156 (WIAV…AATA). H118 contacts chlorophyll a. Y126 contributes to the pheophytin a binding site. 2 residues coordinate [CaMn4O5] cluster: D170 and E189. A helical membrane pass occupies residues 197–218 (FHMLGVAGVFGGSLFSAMHGSL). H198 is a binding site for chlorophyll a. A quinone contacts are provided by residues H215 and 264–265 (SF). H215 provides a ligand contact to Fe cation. H272 contacts Fe cation. The chain crosses the membrane as a helical span at residues 274-288 (FLAAWPVVGIWFTAL). [CaMn4O5] cluster is bound by residues H332, E333, D342, and A344. The propeptide occupies 345 to 353 (AIEAPATNG).

The protein belongs to the reaction center PufL/M/PsbA/D family. In terms of assembly, PSII is composed of 1 copy each of membrane proteins PsbA, PsbB, PsbC, PsbD, PsbE, PsbF, PsbH, PsbI, PsbJ, PsbK, PsbL, PsbM, PsbT, PsbX, PsbY, PsbZ, Psb30/Ycf12, at least 3 peripheral proteins of the oxygen-evolving complex and a large number of cofactors. It forms dimeric complexes. Requires The D1/D2 heterodimer binds P680, chlorophylls that are the primary electron donor of PSII, and subsequent electron acceptors. It shares a non-heme iron and each subunit binds pheophytin, quinone, additional chlorophylls, carotenoids and lipids. D1 provides most of the ligands for the Mn4-Ca-O5 cluster of the oxygen-evolving complex (OEC). There is also a Cl(-1) ion associated with D1 and D2, which is required for oxygen evolution. The PSII complex binds additional chlorophylls, carotenoids and specific lipids. as cofactor. Tyr-161 forms a radical intermediate that is referred to as redox-active TyrZ, YZ or Y-Z. In terms of processing, C-terminally processed by CTPA; processing is essential to allow assembly of the oxygen-evolving complex and thus photosynthetic growth.

It localises to the plastid membrane. The catalysed reaction is 2 a plastoquinone + 4 hnu + 2 H2O = 2 a plastoquinol + O2. In terms of biological role, photosystem II (PSII) is a light-driven water:plastoquinone oxidoreductase that uses light energy to abstract electrons from H(2)O, generating O(2) and a proton gradient subsequently used for ATP formation. It consists of a core antenna complex that captures photons, and an electron transfer chain that converts photonic excitation into a charge separation. The D1/D2 (PsbA/PsbD) reaction center heterodimer binds P680, the primary electron donor of PSII as well as several subsequent electron acceptors. This chain is Photosystem II protein D1, found in Cuscuta reflexa (Southern Asian dodder).